Reading from the N-terminus, the 225-residue chain is DNA-binding response regulator MtrA (225 aa).

Residues 4–117 (RILVVDDDAS…ELVARVRARL (114 aa)) enclose the Response regulatory domain. Residue Asp-53 is modified to 4-aspartylphosphate. Residues 125–224 (AEMLSIADVD…VRGVGYKAGP (100 aa)) constitute a DNA-binding region (ompR/PhoB-type).

Phosphorylated by MtrB.

Member of the two-component regulatory system MtrA/MtrB. In Mycobacterium leprae (strain TN), this protein is DNA-binding response regulator MtrA (mtrA).